We begin with the raw amino-acid sequence, 243 residues long: UPF0246 protein SUB1767 (243 aa).

It belongs to the UPF0246 family.

The sequence is that of UPF0246 protein SUB1767 from Streptococcus uberis (strain ATCC BAA-854 / 0140J).